Here is a 146-residue protein sequence, read N- to C-terminus: Ferredoxin-thioredoxin reductase catalytic chain, chloroplastic (146 aa).

The N-terminal 26 residues, 1-26, are a transit peptide targeting the chloroplast; the sequence is MMSMASTTASPFCPSPMPRGRKCTVR. [4Fe-4S] cluster is bound at residue C85. The Nucleophile role is filled by C87. C87 and C117 form a disulfide bridge. Positions 104, 106, and 115 each coordinate [4Fe-4S] cluster.

The protein belongs to the ferredoxin thioredoxin reductase beta subunit family. In terms of assembly, heterodimer of subunit A (variable subunit) and subunit B (catalytic subunit). Heterodimeric FTR forms a complex with ferredoxin and thioredoxin. The cofactor is [4Fe-4S] cluster.

It localises to the plastid. The protein localises to the chloroplast. The enzyme catalyses [thioredoxin]-disulfide + 2 reduced [2Fe-2S]-[ferredoxin] + 2 H(+) = [thioredoxin]-dithiol + 2 oxidized [2Fe-2S]-[ferredoxin]. Functionally, catalytic subunit of the ferredoxin-thioredoxin reductase (FTR), which catalyzes the two-electron reduction of thioredoxins by the electrons provided by reduced ferredoxin. The polypeptide is Ferredoxin-thioredoxin reductase catalytic chain, chloroplastic (Oryza sativa subsp. japonica (Rice)).